Here is a 399-residue protein sequence, read N- to C-terminus: Probable dual-specificity RNA methyltransferase RlmN (399 aa).

Glutamate 102 functions as the Proton acceptor in the catalytic mechanism. Residues tyrosine 108 to alanine 385 form the Radical SAM core domain. Cysteines 115 and 390 form a disulfide. The [4Fe-4S] cluster site is built by cysteine 122, cysteine 126, and cysteine 129. S-adenosyl-L-methionine is bound by residues glycine 207 to glutamate 208, serine 239, serine 262 to histidine 264, and asparagine 347. The S-methylcysteine intermediate role is filled by cysteine 390.

It belongs to the radical SAM superfamily. RlmN family. It depends on [4Fe-4S] cluster as a cofactor.

It is found in the cytoplasm. It catalyses the reaction adenosine(2503) in 23S rRNA + 2 reduced [2Fe-2S]-[ferredoxin] + 2 S-adenosyl-L-methionine = 2-methyladenosine(2503) in 23S rRNA + 5'-deoxyadenosine + L-methionine + 2 oxidized [2Fe-2S]-[ferredoxin] + S-adenosyl-L-homocysteine. The catalysed reaction is adenosine(37) in tRNA + 2 reduced [2Fe-2S]-[ferredoxin] + 2 S-adenosyl-L-methionine = 2-methyladenosine(37) in tRNA + 5'-deoxyadenosine + L-methionine + 2 oxidized [2Fe-2S]-[ferredoxin] + S-adenosyl-L-homocysteine. Its function is as follows. Specifically methylates position 2 of adenine 2503 in 23S rRNA and position 2 of adenine 37 in tRNAs. In Roseiflexus castenholzii (strain DSM 13941 / HLO8), this protein is Probable dual-specificity RNA methyltransferase RlmN.